The primary structure comprises 390 residues: Digeranylgeranylglycerophospholipid reductase (390 aa).

FAD-binding residues include Ala18, Glu37, Cys48, Ala49, Ala51, Arg98, Val122, Asp278, Gly290, and Ile291. Residue Val368 participates in a 2,3-bis-O-(geranylgeranyl)-sn-glycerol 1-phospholipid binding.

Belongs to the geranylgeranyl reductase family. DGGGPL reductase subfamily. Requires FAD as cofactor.

The enzyme catalyses a 2,3-bis-O-phytanyl-sn-glycerol 1-phospholipid + 8 A = a 2,3-bis-O-(geranylgeranyl)-sn-glycerol 1-phospholipid + 8 AH2. It catalyses the reaction 2,3-bis-O-(phytanyl)-sn-glycerol 1-phosphate + 8 A = 2,3-bis-O-(geranylgeranyl)-sn-glycerol 1-phosphate + 8 AH2. It carries out the reaction CDP-2,3-bis-O-(geranylgeranyl)-sn-glycerol + 8 AH2 = CDP-2,3-bis-O-(phytanyl)-sn-glycerol + 8 A. The catalysed reaction is archaetidylserine + 8 AH2 = 2,3-bis-O-phytanyl-sn-glycero-3-phospho-L-serine + 8 A. Its pathway is membrane lipid metabolism; glycerophospholipid metabolism. Is involved in the reduction of 2,3-digeranylgeranylglycerophospholipids (unsaturated archaeols) into 2,3-diphytanylglycerophospholipids (saturated archaeols) in the biosynthesis of archaeal membrane lipids. Catalyzes the formation of archaetidic acid (2,3-di-O-phytanyl-sn-glyceryl phosphate) from 2,3-di-O-geranylgeranylglyceryl phosphate (DGGGP) via the hydrogenation of each double bond of the isoprenoid chains. Is also probably able to reduce double bonds of geranyl groups in CDP-2,3-bis-O-(geranylgeranyl)-sn-glycerol and archaetidylserine, thus acting at various stages in the biosynthesis of archaeal membrane lipids. The chain is Digeranylgeranylglycerophospholipid reductase from Methanococcus maripaludis (strain C7 / ATCC BAA-1331).